The primary structure comprises 794 residues: Putative neurotrophin receptor LTRK 1 (794 aa).

The first 33 residues, 1-33, serve as a signal peptide directing secretion; it reads MRGPRRFRLWTRANVLTVISILTSILSGAGCSP. Residues 34 to 419 are Extracellular-facing; sequence LSQLPSDNPA…PTEDFGPQTQ (386 aa). The disordered stretch occupies residues 36–102; that stretch reads QLPSDNPAHV…DQVPGDASRN (67 aa). N-linked (GlcNAc...) asparagine glycans are attached at residues Asn64, Asn102, and Asn128. LRR repeat units lie at residues 181–202 and 205–226; these read CLKH…AFKT and SLET…LLRT. The region spanning 237–280 is the LRRCT domain; the sequence is NALTCSCTNLWLRSVDVAADRSEMTCSTRDGVSKMKMTQFKCEP. Asn288 and Asn374 each carry an N-linked (GlcNAc...) asparagine glycan. The chain crosses the membrane as a helical span at residues 420-440; sequence VILPVVGVVILLISAVFIIYL. Topologically, residues 441-794 are cytoplasmic; sequence CQRAKHRSHA…GDPVYIDIIA (354 aa). The region spanning 504 to 775 is the Protein kinase domain; it reads ILLMRVIGEG…PQDRLTMKDI (272 aa). ATP contacts are provided by residues 510-518 and Lys538; that span reads IGEGAFGRV. Asp647 serves as the catalytic Proton acceptor. Phosphotyrosine; by autocatalysis occurs at positions 673, 677, 678, and 789.

Belongs to the protein kinase superfamily. Tyr protein kinase family. Insulin receptor subfamily. In terms of tissue distribution, expression is confined to the central nervous system and its associated endocrine tissues.

It localises to the membrane. The enzyme catalyses L-tyrosyl-[protein] + ATP = O-phospho-L-tyrosyl-[protein] + ADP + H(+). Functionally, may bind an endogenous invertebrate neurotrophin. Binds human NT-3, but not NGF or BDNF. The sequence is that of Putative neurotrophin receptor LTRK 1 from Lymnaea stagnalis (Great pond snail).